The chain runs to 386 residues: Cytochrome b (386 aa).

Helical transmembrane passes span 32–52 (TGSLTGLCLVIQIASGIFTAM), 76–98 (YLIRYIHANGASFFFVCMYGHIG), 113–133 (VWVIGVIIFITTMATAFTGYC), and 179–199 (FFALHYLCPFILAALVVMHLM). Heme b is bound by residues histidine 82 and histidine 96. Heme b-binding residues include histidine 183 and histidine 197. Histidine 202 serves as a coordination point for a ubiquinone. The next 4 membrane-spanning stretches (helical) occupy residues 225 to 245 (FVFKDLVTVFVFLLIFSTFVF), 289 to 309 (LGGVIAMFGSILITLVLPVTD), 321 to 341 (FSKTLYFTFTYNFILLGQLGQ), and 348 to 368 (FIEMGQIATFNYFTYFIVLVP).

It belongs to the cytochrome b family. Fungal cytochrome b-c1 complex contains 10 subunits; 3 respiratory subunits, 2 core proteins and 5 low-molecular weight proteins. Cytochrome b-c1 complex is a homodimer. The cofactor is heme b.

Its subcellular location is the mitochondrion inner membrane. Functionally, component of the ubiquinol-cytochrome c reductase complex (complex III or cytochrome b-c1 complex) that is part of the mitochondrial respiratory chain. The b-c1 complex mediates electron transfer from ubiquinol to cytochrome c. Contributes to the generation of a proton gradient across the mitochondrial membrane that is then used for ATP synthesis. This is Cytochrome b (COB) from Wickerhamomyces pijperi (Yeast).